A 280-amino-acid chain; its full sequence is Gem-associated protein 2 (280 aa).

The may play a minor inhibitory role in snRNA binding to 5Sm (SNRPD1, SNRPD2, SNRPE, SNRPF and SNRPG) during snRNP assembly by inserting into the RNA binding pocket of 5Sm stretch occupies residues 1-39; it reads MRRAELAGLKTMAWVPAESAVEELMPRLLPVEPCDLTEG. Serine 81 and serine 166 each carry phosphoserine.

Belongs to the gemin-2 family. As to quaternary structure, monomer. Part of the core SMN complex that contains SMN1, GEMIN2/SIP1, DDX20/GEMIN3, GEMIN4, GEMIN5, GEMIN6, GEMIN7, GEMIN8 and STRAP/UNRIP. Part of the SMN-Sm complex that contains SMN1, GEMIN2/SIP1, DDX20/GEMIN3, GEMIN4, GEMIN5, GEMIN6, GEMIN7, GEMIN8, STRAP/UNRIP and the Sm proteins SNRPB, SNRPD1, SNRPD2, SNRPD3, SNRPE, SNRPF and SNRPG. Interacts with GEMIN5; the interaction is direct. Interacts (via C-terminus) with SMN1; the interaction is direct. Interacts with SNRPD1; the interaction is direct. Interacts with SNRPD2; the interaction is direct. Interacts (via N-terminus) with SNRPF; the interaction is direct. Interacts (via N-terminus) with SNRPE; the interaction is direct. Interacts (via N-terminus) with SNRPG; the interaction is direct.

It localises to the nucleus. Its subcellular location is the gem. It is found in the cytoplasm. Functionally, the SMN complex catalyzes the assembly of small nuclear ribonucleoproteins (snRNPs), the building blocks of the spliceosome, and thereby plays an important role in the splicing of cellular pre-mRNAs. Most spliceosomal snRNPs contain a common set of Sm proteins SNRPB, SNRPD1, SNRPD2, SNRPD3, SNRPE, SNRPF and SNRPG that assemble in a heptameric protein ring on the Sm site of the small nuclear RNA to form the core snRNP (Sm core). In the cytosol, the Sm proteins SNRPD1, SNRPD2, SNRPE, SNRPF and SNRPG (5Sm) are trapped in an inactive 6S pICln-Sm complex by the chaperone CLNS1A that controls the assembly of the core snRNP. To assemble core snRNPs, the SMN complex accepts the trapped 5Sm proteins from CLNS1A. Binding of snRNA inside 5Sm ultimately triggers eviction of the SMN complex, thereby allowing binding of SNRPD3 and SNRPB to complete assembly of the core snRNP. Within the SMN complex, GEMIN2 constrains the conformation of 5Sm, thereby promoting 5Sm binding to snRNA containing the snRNP code (a nonameric Sm site and a 3'-adjacent stem-loop), thus preventing progression of assembly until a cognate substrate is bound. This Homo sapiens (Human) protein is Gem-associated protein 2.